A 1703-amino-acid polypeptide reads, in one-letter code: Gingipain R1 (1703 aa).

The signal sequence occupies residues 1-20 (MNKFVSIALCSSLLGGMAFA). Residues 21 to 224 (QQTELGRNPN…RMFMNYEPGR (204 aa)) constitute a propeptide that is removed on maturation. Asp302, Val324, Asp327, Tyr329, Glu331, Glu385, and His390 together coordinate Ca(2+). His435 acts as the Proton donor in catalysis. The active-site Nucleophile is the Cys468. Residues Phe473, Glu482, Asp516, Glu517, Glu520, and His526 each coordinate Ca(2+). The tract at residues 940–968 (WDAPNGTPNPNPNPNPNPNPGTTTLSESF) is disordered. Positions 946–958 (TPNPNPNPNPNPN) are enriched in pro residues.

The protein belongs to the peptidase C25 family.

It is found in the secreted. It catalyses the reaction Hydrolysis of proteins and small molecule substrates, with a preference for Arg in P1.. Thiol protease. Acts synergistically with RgpB to catalyze the maturation of fimbrial subunits, such as FimA. Its proteolytic activity is a major factor in both periodontal tissue destruction and in evasion of host defense mechanisms. The protein is Gingipain R1 of Porphyromonas gingivalis (strain ATCC 33277 / DSM 20709 / CIP 103683 / JCM 12257 / NCTC 11834 / 2561).